The following is a 149-amino-acid chain: Putative pre-16S rRNA nuclease (149 aa).

This sequence belongs to the YqgF nuclease family.

Its subcellular location is the cytoplasm. Could be a nuclease involved in processing of the 5'-end of pre-16S rRNA. This Burkholderia orbicola (strain MC0-3) protein is Putative pre-16S rRNA nuclease.